The following is a 158-amino-acid chain: 2S seed storage albumin protein (158 aa).

The first 21 residues, 1–21 (MTKFTILLISLLFCIAHTCSA), serve as a signal peptide directing secretion. The Cell attachment site signature appears at 54–56 (RGD). Residues 65–81 (NHILRTMRGRINYIRRN) constitute a propeptide that is removed on maturation.

It belongs to the 2S seed storage albumins family. The protein consists of two chains linked by 2 disulfide bonds. As to expression, expressed in cotyledons. Maximal expression in parenchyma cells undergoing DNA endoreduplication and cell expansion but not in actively dividing cells of the cotyledon.

In terms of biological role, this is a 2S seed storage protein. Binds to mammalian chromatin, preventing the normal formation of the kinetochore complex in the centromere and leading to the disruption of mitosis. In Glycine max (Soybean), this protein is 2S seed storage albumin protein.